The primary structure comprises 390 residues: UPF0229 protein ABC1477 (390 aa).

2 disordered regions span residues 1–31 and 81–118; these read MEKD…RHQE and VGQG…QAGE. Polar residues predominate over residues 7-16; that stretch reads RQFTISQENW. 2 stretches are compositionally biased toward basic and acidic residues: residues 22–31 and 86–100; these read GFQDQRRHQE and GDSK…DPNG.

Belongs to the UPF0229 family.

The protein is UPF0229 protein ABC1477 of Shouchella clausii (strain KSM-K16) (Alkalihalobacillus clausii).